Consider the following 303-residue polypeptide: Mitochondrial basic amino acids transporter (303 aa).

6 consecutive transmembrane segments (helical) span residues 2-22 (ALDF…GHPF), 61-81 (GLGS…GVQG), 96-116 (FLAG…MELA), 153-172 (GMVS…FLTY), 187-207 (LLVP…WLST), and 255-275 (LLRA…VLTY). 3 Solcar repeats span residues 2–86 (ALDF…TLRA), 90–178 (DSPL…LTRA), and 185–275 (DRLL…VLTY). Residues 282–303 (GPEGEAVPAAPAGPALAQPSSL) are disordered. Residues 284–303 (EGEAVPAAPAGPALAQPSSL) are compositionally biased toward low complexity.

The protein belongs to the mitochondrial carrier (TC 2.A.29) family.

It is found in the mitochondrion inner membrane. The enzyme catalyses L-lysine(out) + L-arginine(in) = L-lysine(in) + L-arginine(out). It carries out the reaction L-histidine(out) + L-arginine(in) = L-histidine(in) + L-arginine(out). It catalyses the reaction L-ornithine(in) + L-arginine(out) = L-ornithine(out) + L-arginine(in). The catalysed reaction is L-homoarginine(in) + L-arginine(out) = L-homoarginine(out) + L-arginine(in). The enzyme catalyses N(omega)-methyl-L-arginine(in) + L-arginine(out) = N(omega)-methyl-L-arginine(out) + L-arginine(in). It carries out the reaction L-arginine(in) = L-arginine(out). It catalyses the reaction L-lysine(in) = L-lysine(out). The catalysed reaction is L-ornithine(in) = L-ornithine(out). The enzyme catalyses L-histidine(out) = L-histidine(in). Mitochondrial transporter of arginine, lysine, homoarginine, methylarginine and, to a much lesser extent, ornithine and histidine. Does not transport carnitine nor acylcarnitines. Functions by both counter-exchange and uniport mechanisms. Plays a physiological role in the import of basic amino acids into mitochondria for mitochondrial protein synthesis and amino acid degradation. The protein is Mitochondrial basic amino acids transporter of Homo sapiens (Human).